A 630-amino-acid chain; its full sequence is tRNA uridine 5-carboxymethylaminomethyl modification enzyme MnmG (630 aa).

13–18 (GGGHAG) serves as a coordination point for FAD. 273-287 (GPRYCPSIEDKVMRF) provides a ligand contact to NAD(+).

Belongs to the MnmG family. As to quaternary structure, homodimer. Heterotetramer of two MnmE and two MnmG subunits. FAD is required as a cofactor.

Its subcellular location is the cytoplasm. NAD-binding protein involved in the addition of a carboxymethylaminomethyl (cmnm) group at the wobble position (U34) of certain tRNAs, forming tRNA-cmnm(5)s(2)U34. The sequence is that of tRNA uridine 5-carboxymethylaminomethyl modification enzyme MnmG from Actinobacillus pleuropneumoniae serotype 7 (strain AP76).